Consider the following 357-residue polypeptide: tRNA/tmRNA (uracil-C(5))-methyltransferase (357 aa).

Residues Q180, Y209, N214, E230, and D290 each coordinate S-adenosyl-L-methionine. C315 (nucleophile) is an active-site residue. E349 serves as the catalytic Proton acceptor.

Belongs to the class I-like SAM-binding methyltransferase superfamily. RNA M5U methyltransferase family. TrmA subfamily.

It carries out the reaction uridine(54) in tRNA + S-adenosyl-L-methionine = 5-methyluridine(54) in tRNA + S-adenosyl-L-homocysteine + H(+). It catalyses the reaction uridine(341) in tmRNA + S-adenosyl-L-methionine = 5-methyluridine(341) in tmRNA + S-adenosyl-L-homocysteine + H(+). Its function is as follows. Dual-specificity methyltransferase that catalyzes the formation of 5-methyluridine at position 54 (m5U54) in all tRNAs, and that of position 341 (m5U341) in tmRNA (transfer-mRNA). The polypeptide is tRNA/tmRNA (uracil-C(5))-methyltransferase (Campylobacter jejuni (strain RM1221)).